Here is a 96-residue protein sequence, read N- to C-terminus: ESAT-6-like protein SAG0230 (96 aa).

Belongs to the WXG100 family. sagEsxA-like subfamily. Homodimer.

The chain is ESAT-6-like protein SAG0230 from Streptococcus agalactiae serotype V (strain ATCC BAA-611 / 2603 V/R).